We begin with the raw amino-acid sequence, 612 residues long: UvrABC system protein C (612 aa).

The region spanning 20 to 98 (THSGVYRMLD…IKQHRPKYNI (79 aa)) is the GIY-YIG domain. The region spanning 208 to 243 (SSVLEEISAKMYQASEDMEYEKAQVYRDQLVILRKL) is the UVR domain.

It belongs to the UvrC family. As to quaternary structure, interacts with UvrB in an incision complex.

Its subcellular location is the cytoplasm. Functionally, the UvrABC repair system catalyzes the recognition and processing of DNA lesions. UvrC both incises the 5' and 3' sides of the lesion. The N-terminal half is responsible for the 3' incision and the C-terminal half is responsible for the 5' incision. This chain is UvrABC system protein C, found in Francisella philomiragia subsp. philomiragia (strain ATCC 25017 / CCUG 19701 / FSC 153 / O#319-036).